Reading from the N-terminus, the 376-residue chain is 3-dehydroquinate synthase (376 aa).

Residues glycine 115–aspartate 119, threonine 139–serine 140, lysine 152, and lysine 161 contribute to the NAD(+) site. Zn(2+) contacts are provided by glutamate 194, histidine 256, and histidine 275.

Belongs to the sugar phosphate cyclases superfamily. Dehydroquinate synthase family. It depends on Co(2+) as a cofactor. Zn(2+) is required as a cofactor. Requires NAD(+) as cofactor.

The protein localises to the cytoplasm. The catalysed reaction is 7-phospho-2-dehydro-3-deoxy-D-arabino-heptonate = 3-dehydroquinate + phosphate. The protein operates within metabolic intermediate biosynthesis; chorismate biosynthesis; chorismate from D-erythrose 4-phosphate and phosphoenolpyruvate: step 2/7. In terms of biological role, catalyzes the conversion of 3-deoxy-D-arabino-heptulosonate 7-phosphate (DAHP) to dehydroquinate (DHQ). The chain is 3-dehydroquinate synthase from Rhizobium johnstonii (strain DSM 114642 / LMG 32736 / 3841) (Rhizobium leguminosarum bv. viciae).